Consider the following 361-residue polypeptide: 3-dehydroquinate synthase (361 aa).

NAD(+) is bound by residues 71-76 (DGEQYK), 105-109 (GVIGD), 129-130 (TT), Lys142, and Lys151. Zn(2+)-binding residues include Glu184, His247, and His264.

It belongs to the sugar phosphate cyclases superfamily. Dehydroquinate synthase family. Requires Co(2+) as cofactor. Zn(2+) is required as a cofactor. The cofactor is NAD(+).

It is found in the cytoplasm. It carries out the reaction 7-phospho-2-dehydro-3-deoxy-D-arabino-heptonate = 3-dehydroquinate + phosphate. Its pathway is metabolic intermediate biosynthesis; chorismate biosynthesis; chorismate from D-erythrose 4-phosphate and phosphoenolpyruvate: step 2/7. In terms of biological role, catalyzes the conversion of 3-deoxy-D-arabino-heptulosonate 7-phosphate (DAHP) to dehydroquinate (DHQ). This Pectobacterium atrosepticum (strain SCRI 1043 / ATCC BAA-672) (Erwinia carotovora subsp. atroseptica) protein is 3-dehydroquinate synthase.